Consider the following 788-residue polypeptide: Endonuclease MutS2 (788 aa).

332 to 339 (GPNTGGKT) contacts ATP. A Smr domain is found at 713-788 (VDLRGMDAEE…GTGVTVVELK (76 aa)).

It belongs to the DNA mismatch repair MutS family. MutS2 subfamily. Homodimer. Binds to stalled ribosomes, contacting rRNA.

Its function is as follows. Endonuclease that is involved in the suppression of homologous recombination and thus may have a key role in the control of bacterial genetic diversity. Functionally, acts as a ribosome collision sensor, splitting the ribosome into its 2 subunits. Detects stalled/collided 70S ribosomes which it binds and splits by an ATP-hydrolysis driven conformational change. Acts upstream of the ribosome quality control system (RQC), a ribosome-associated complex that mediates the extraction of incompletely synthesized nascent chains from stalled ribosomes and their subsequent degradation. Probably generates substrates for RQC. In Clostridium botulinum (strain Langeland / NCTC 10281 / Type F), this protein is Endonuclease MutS2.